The following is a 376-amino-acid chain: MSTTVIGPYEDDDPTEACSTIHHEVIGTTTCLSGGEDVPLAPLTTLKVGGPARHLVIATTHDELLATVRDCDRRGEPCLVLGGGSNVLVGDNGFDGTVVRVATSGLSAEVSSCGGALVTVAAGQVWDDFVVHAIEQEWIGPEFLSGIPGLVGSTPIQNVGAYGVEVGEFIARVRTWDRVDDTQRTFTADQCDFGYRSSRFKAEPDRYVVLDVTMQFNLGTRSLPVRYAELARRLGVEPGERVDTSQVRETVLAVRAGKGMVLNPNDHDTWSAGSFFTNPLVSPDQVPEGAPAFAQSDGRVKTSAAWLIDHAGYGKGFKVAEDAPASLSTKHVLALTNRGGASSGDFTTLARTVIDGVRDVYGITLVPEPRLIGCTI.

The FAD-binding PCMH-type domain occupies 48 to 219 (VGGPARHLVI…LDVTMQFNLG (172 aa)). Arginine 196 is an active-site residue. Serine 274 functions as the Proton donor in the catalytic mechanism. The active site involves glutamate 368.

The protein belongs to the MurB family. FAD serves as cofactor.

Its subcellular location is the cytoplasm. It carries out the reaction UDP-N-acetyl-alpha-D-muramate + NADP(+) = UDP-N-acetyl-3-O-(1-carboxyvinyl)-alpha-D-glucosamine + NADPH + H(+). It functions in the pathway cell wall biogenesis; peptidoglycan biosynthesis. Its function is as follows. Cell wall formation. This Cutibacterium acnes (strain DSM 16379 / KPA171202) (Propionibacterium acnes) protein is UDP-N-acetylenolpyruvoylglucosamine reductase.